A 183-amino-acid polypeptide reads, in one-letter code: Non-classical export protein 2 homolog (183 aa).

Residues 1 to 8 (MVGIRQYG) lie on the Cytoplasmic side of the membrane. A helical transmembrane segment spans residues 9–29 (VFTWVFRTFQLAIDTIVLALA). Residues 30–44 (SALVNQQTSGGSPGK) lie on the Extracellular side of the membrane. A helical transmembrane segment spans residues 45-65 (INFSVAVGSFAILTFFLTAVG). Residues 66–75 (RFLPTILGNP) lie on the Cytoplasmic side of the membrane. The chain crosses the membrane as a helical span at residues 76–96 (WLIAFYDFVNWVFALTGGCCI). The Extracellular segment spans residues 97–131 (AVAIRVHACDNQKYLDRNHYTQGSMRRCQELKALC). A helical membrane pass occupies residues 132-152 (FFLWFMFGLYVASFIVQIFIA). The Cytoplasmic portion of the chain corresponds to 153 to 183 (KNDTPNYTFRGRGRGKGSGPAVAPRPVMSAV). The tract at residues 163-183 (GRGRGKGSGPAVAPRPVMSAV) is disordered.

It belongs to the NCE102 family.

The protein resides in the cytoplasm. The protein localises to the golgi apparatus membrane. It is found in the cell membrane. Involved in membrane organization and might act as a sensor of sphingolipids that regulates plasma membrane function. Involved in a novel pathway of export of proteins that lack a cleavable signal sequence. The chain is Non-classical export protein 2 homolog (fhn1) from Schizosaccharomyces pombe (strain 972 / ATCC 24843) (Fission yeast).